A 76-amino-acid polypeptide reads, in one-letter code: ATP synthase subunit c (76 aa).

Transmembrane regions (helical) follow at residues 13–33 and 55–75; these read LNVV…GILI and FLGL…AFIF.

Belongs to the ATPase C chain family. F-type ATPases have 2 components, F(1) - the catalytic core - and F(0) - the membrane proton channel. F(1) has five subunits: alpha(3), beta(3), gamma(1), delta(1), epsilon(1). F(0) has three main subunits: a(1), b(2) and c(10-14). The alpha and beta chains form an alternating ring which encloses part of the gamma chain. F(1) is attached to F(0) by a central stalk formed by the gamma and epsilon chains, while a peripheral stalk is formed by the delta and b chains.

It localises to the cell membrane. Its function is as follows. F(1)F(0) ATP synthase produces ATP from ADP in the presence of a proton or sodium gradient. F-type ATPases consist of two structural domains, F(1) containing the extramembraneous catalytic core and F(0) containing the membrane proton channel, linked together by a central stalk and a peripheral stalk. During catalysis, ATP synthesis in the catalytic domain of F(1) is coupled via a rotary mechanism of the central stalk subunits to proton translocation. Functionally, key component of the F(0) channel; it plays a direct role in translocation across the membrane. A homomeric c-ring of between 10-14 subunits forms the central stalk rotor element with the F(1) delta and epsilon subunits. This is ATP synthase subunit c from Bifidobacterium animalis subsp. lactis (strain AD011).